We begin with the raw amino-acid sequence, 153 residues long: UPF0260 protein YcgN (153 aa).

Belongs to the UPF0260 family.

This chain is UPF0260 protein YcgN, found in Salmonella agona (strain SL483).